Reading from the N-terminus, the 404-residue chain is Nicotinate phosphoribosyltransferase (404 aa).

At His-225 the chain carries Phosphohistidine; by autocatalysis.

Belongs to the NAPRTase family. Post-translationally, transiently phosphorylated on a His residue during the reaction cycle. Phosphorylation strongly increases the affinity for substrates and increases the rate of nicotinate D-ribonucleotide production. Dephosphorylation regenerates the low-affinity form of the enzyme, leading to product release.

The catalysed reaction is nicotinate + 5-phospho-alpha-D-ribose 1-diphosphate + ATP + H2O = nicotinate beta-D-ribonucleotide + ADP + phosphate + diphosphate. It functions in the pathway cofactor biosynthesis; NAD(+) biosynthesis; nicotinate D-ribonucleotide from nicotinate: step 1/1. Its function is as follows. Catalyzes the synthesis of beta-nicotinate D-ribonucleotide from nicotinate and 5-phospho-D-ribose 1-phosphate at the expense of ATP. The chain is Nicotinate phosphoribosyltransferase from Methanosarcina acetivorans (strain ATCC 35395 / DSM 2834 / JCM 12185 / C2A).